Reading from the N-terminus, the 420-residue chain is Probable protein phosphatase 2C 76 (420 aa).

Residues 101–347 (SCGYCSFRGK…DNITCIVVKF (247 aa)) form the PPM-type phosphatase domain. Mn(2+)-binding residues include D137, G138, D299, and D338. Positions 353-420 (ESPKIETNAM…PETKGEKAGE (68 aa)) are disordered. Over residues 403 to 420 (PDPKPETEPETKGEKAGE) the composition is skewed to basic and acidic residues.

It belongs to the PP2C family. Mg(2+) is required as a cofactor. Mn(2+) serves as cofactor.

It catalyses the reaction O-phospho-L-seryl-[protein] + H2O = L-seryl-[protein] + phosphate. It carries out the reaction O-phospho-L-threonyl-[protein] + H2O = L-threonyl-[protein] + phosphate. In Arabidopsis thaliana (Mouse-ear cress), this protein is Probable protein phosphatase 2C 76.